A 396-amino-acid chain; its full sequence is Unsaturated chondroitin disaccharide hydrolase (396 aa).

Asp113 functions as the Nucleophile in the catalytic mechanism. 8 residues coordinate substrate: Asp113, Asp173, Gly231, Thr233, Arg245, Trp249, Ser363, and Ser366. Catalysis depends on Asp173, which acts as the Proton donor.

The protein belongs to the glycosyl hydrolase 88 family. Monomer.

It catalyses the reaction beta-D-4-deoxy-Delta(4)-GlcpA-(1-&gt;3)-beta-D-GalpNAc6S + H2O = N-acetyl-beta-D-galactosamine 6-sulfate + 5-dehydro-4-deoxy-D-glucuronate. Catalyzes the hydrolysis of unsaturated hyaluronate and chondroitin disaccharides. Also degrades unsaturated heparin disaccharides. Releases 4-deoxy-4,5-didehydro D-glucuronic acid or 4-deoxy-4,5-didehydro L-iduronic acid from chondroitin disaccharides, hyaluronan disaccharides and heparin disaccharides and cleaves both glycosidic (1-&gt;3) and (1-&gt;4) bonds. Prefers sulfated glycosaminoglycans compared to unsulfated glycosaminoglycans. Probably required for mammalian cells invasion through the degradation of extracellular sulfated glycosaminoglycans such as chondroitin and hyaluronan. In Streptococcus pneumoniae (strain ATCC BAA-255 / R6), this protein is Unsaturated chondroitin disaccharide hydrolase (ugl).